The primary structure comprises 108 residues: MAASCLLRQGRAGALKTMLQEAQVFRGLASTVSLSAESGKSEKGQPQNSKKQSPPKKPAPVPAEPFDNSTYKNLQHHDYSTYTFLDLNLELSKFRMPQPSSGRESPRH.

The N-terminal 34 residues, 1–34 (MAASCLLRQGRAGALKTMLQEAQVFRGLASTVSL), are a transit peptide targeting the mitochondrion. The segment at 33 to 72 (SLSAESGKSEKGQPQNSKKQSPPKKPAPVPAEPFDNSTYK) is disordered. Ser-105 carries the post-translational modification Phosphoserine.

It belongs to the complex I NDUFV3 subunit family. In terms of assembly, complex I is composed of 45 different subunits. This is a component of the flavoprotein-sulfur (FP) fragment of the enzyme.

It is found in the mitochondrion inner membrane. Its function is as follows. Accessory subunit of the mitochondrial membrane respiratory chain NADH dehydrogenase (Complex I), that is believed not to be involved in catalysis. Complex I functions in the transfer of electrons from NADH to the respiratory chain. The immediate electron acceptor for the enzyme is believed to be ubiquinone. May be the terminally assembled subunit of Complex I. The polypeptide is NADH dehydrogenase [ubiquinone] flavoprotein 3, mitochondrial (NDUFV3) (Gorilla gorilla gorilla (Western lowland gorilla)).